The chain runs to 221 residues: GTP-binding nuclear protein Ran-2 (221 aa).

A Small GTPase Ran-type domain is found at aspartate 10–aspartate 174. Aspartate 21–threonine 28 is a binding site for GTP. A switch-I region spans residues lysine 40–valine 48. GTP contacts are provided by residues glycine 71, asparagine 125–aspartate 128, and serine 153–lysine 155. The segment at glycine 71–glutamine 87 is switch-II. Over residues alanine 202–leucine 212 the composition is skewed to low complexity. Residues alanine 202 to glutamate 221 are disordered.

Belongs to the small GTPase superfamily. Ran family. Found in a nuclear export complex with RanGTP, exportin and pre-miRNA. Interacts with RanBP1a and RanBP1b. Interacts with PHRIP1. Interacts with KPNB1. Binds to PHIP1.

It is found in the nucleus. It localises to the nucleus envelope. GTP-binding protein involved in nucleocytoplasmic transport. Required for the import of protein into the nucleus and also for RNA export. Involved in chromatin condensation and control of cell cycle. In Arabidopsis thaliana (Mouse-ear cress), this protein is GTP-binding nuclear protein Ran-2.